The following is a 957-amino-acid chain: Histone-lysine N-methyltransferase, H3 lysine-9 specific SUVH3 (957 aa).

Residues 73–243 enclose the YDG domain; the sequence is GHPPGVALGD…PQVCKFLMHG (171 aa). Residues 182–209 form a disordered region; it reads EAGGGEGGGGGEGGGGAKKGKGGKGGGK. Gly residues predominate over residues 183–198; the sequence is AGGGEGGGGGEGGGGA. The 123-residue stretch at 319-441 folds into the Pre-SET domain; the sequence is DVSGGQEAVP…HECGDGCSAK (123 aa). Positions 455-920 constitute an SET domain; sequence LPLEVFMTES…QLEELSYNYG (466 aa). 3 disordered regions span residues 552–595, 611–647, and 783–805; these read DAAR…GGAE, AAGTAPGAGDNMDGVEGPAAQRSGGEEAAAGPGSSGA, and PPALPSTSDVGNGGTTGSGGGGG. A compositionally biased stretch (low complexity) spans 560–578; the sequence is QQPQQQQPQQQQQQPAAGG. Gly residues predominate over residues 793–805; it reads GNGGTTGSGGGGG. The Post-SET domain occupies 941–957; that stretch reads FVMQCNCGAVGCIGNLM.

This sequence belongs to the class V-like SAM-binding methyltransferase superfamily. Histone-lysine methyltransferase family. Suvar3-9 subfamily.

Its subcellular location is the nucleus. It localises to the chromosome. The catalysed reaction is L-lysyl(9)-[histone H3] + S-adenosyl-L-methionine = N(6)-methyl-L-lysyl(9)-[histone H3] + S-adenosyl-L-homocysteine + H(+). Functionally, histone methyltransferase. Monomethylates specifically 'Lys-9' of histone H3. H3 'Lys-9Me1' (H3K9me1) functions as an epigenetic mark of repressed chromatin. The chain is Histone-lysine N-methyltransferase, H3 lysine-9 specific SUVH3 (SUVH3) from Chlamydomonas reinhardtii (Chlamydomonas smithii).